A 425-amino-acid polypeptide reads, in one-letter code: UDP-N-acetylglucosamine 1-carboxyvinyltransferase (425 aa).

Phosphoenolpyruvate is bound at residue 23-24 (KN). Residue R100 coordinates UDP-N-acetyl-alpha-D-glucosamine. C124 serves as the catalytic Proton donor. The residue at position 124 (C124) is a 2-(S-cysteinyl)pyruvic acid O-phosphothioketal. Residues 169–172 (KVSV), D313, and V335 contribute to the UDP-N-acetyl-alpha-D-glucosamine site.

Belongs to the EPSP synthase family. MurA subfamily.

It localises to the cytoplasm. The catalysed reaction is phosphoenolpyruvate + UDP-N-acetyl-alpha-D-glucosamine = UDP-N-acetyl-3-O-(1-carboxyvinyl)-alpha-D-glucosamine + phosphate. It functions in the pathway cell wall biogenesis; peptidoglycan biosynthesis. In terms of biological role, cell wall formation. Adds enolpyruvyl to UDP-N-acetylglucosamine. The protein is UDP-N-acetylglucosamine 1-carboxyvinyltransferase of Wolbachia pipientis subsp. Culex pipiens (strain wPip).